A 371-amino-acid chain; its full sequence is Cytoplasmic dynein intermediate light chain DYN3 (371 aa).

This sequence belongs to the dynein light intermediate chain DYN3 family. The cytoplasmic dynein is composed of at least two heavy chains and a number of intermediate and light chains.

The protein resides in the cytoplasm. It localises to the cytoskeleton. Its function is as follows. Component of the cytoplasmic dynein which acts as a motor for the intracellular retrograde motility of vesicles and organelles along microtubules. May play an important role in the proper orientation of the mitotic spindle into the budding daughter cell yeast. Probably required for normal progression of the cell cycle. This chain is Cytoplasmic dynein intermediate light chain DYN3 (DYN3), found in Eremothecium gossypii (strain ATCC 10895 / CBS 109.51 / FGSC 9923 / NRRL Y-1056) (Yeast).